A 185-amino-acid polypeptide reads, in one-letter code: Protein GrpE (185 aa).

The tract at residues 1 to 22 (MTASQEPVDQAPESNEPAPAVP) is disordered.

The protein belongs to the GrpE family. Homodimer.

Its subcellular location is the cytoplasm. In terms of biological role, participates actively in the response to hyperosmotic and heat shock by preventing the aggregation of stress-denatured proteins, in association with DnaK and GrpE. It is the nucleotide exchange factor for DnaK and may function as a thermosensor. Unfolded proteins bind initially to DnaJ; upon interaction with the DnaJ-bound protein, DnaK hydrolyzes its bound ATP, resulting in the formation of a stable complex. GrpE releases ADP from DnaK; ATP binding to DnaK triggers the release of the substrate protein, thus completing the reaction cycle. Several rounds of ATP-dependent interactions between DnaJ, DnaK and GrpE are required for fully efficient folding. This chain is Protein GrpE, found in Bordetella petrii (strain ATCC BAA-461 / DSM 12804 / CCUG 43448).